An 878-amino-acid polypeptide reads, in one-letter code: Protein argonaute 6 (878 aa).

Over residues methionine 1 to glutamate 17 the composition is skewed to low complexity. Positions methionine 1–aspartate 25 are disordered. In terms of domain architecture, PAZ spans proline 259–serine 372. The Piwi domain occupies phenylalanine 541–lysine 851.

Belongs to the argonaute family. Ago subfamily. As to expression, expressed in roots, cotyledons and shoot meristematic region.

The protein localises to the nucleus. Its function is as follows. Involved in transcriptional gene silencing (TGS). Component of the RISC complex that associate with the small interfering RNA (siRNA) pathway involved in direct cytosine methylation at endogenous DNA repeats. Required for the accumulation of specific siRNAs derived from transgene and heterochromatin-related endogenous loci. Involved in RNA-directed DNA methylation (RdDM) at specific endogenous loci. Probably not required for the accumulation of siRNAs derived from transgene inverted repeats that induce post-transcriptional gene silencing (PTGS). Associates mainly with small RNAs of 24 nucleotide in length and preferentially recruits small RNAs with a 5' terminal adenosine. Targeted by turnip yellows virus (TuYV) protein P0 (via F-box-like domain) for probable proteasome degradation and thereby inactivating AGO6 function in RNA silencing. The chain is Protein argonaute 6 (AGO6) from Arabidopsis thaliana (Mouse-ear cress).